Here is a 236-residue protein sequence, read N- to C-terminus: Pyridoxine 5'-phosphate synthase (236 aa).

Asparagine 6 contributes to the 3-amino-2-oxopropyl phosphate binding site. Residue 8 to 9 coordinates 1-deoxy-D-xylulose 5-phosphate; the sequence is DH. A 3-amino-2-oxopropyl phosphate-binding site is contributed by arginine 17. The Proton acceptor role is filled by histidine 42. Residues arginine 44 and histidine 49 each contribute to the 1-deoxy-D-xylulose 5-phosphate site. The Proton acceptor role is filled by glutamate 69. A 1-deoxy-D-xylulose 5-phosphate-binding site is contributed by threonine 99. Histidine 190 (proton donor) is an active-site residue. Residues glycine 191 and 212–213 contribute to the 3-amino-2-oxopropyl phosphate site; that span reads GH.

Belongs to the PNP synthase family. Homooctamer; tetramer of dimers.

Its subcellular location is the cytoplasm. The enzyme catalyses 3-amino-2-oxopropyl phosphate + 1-deoxy-D-xylulose 5-phosphate = pyridoxine 5'-phosphate + phosphate + 2 H2O + H(+). Its pathway is cofactor biosynthesis; pyridoxine 5'-phosphate biosynthesis; pyridoxine 5'-phosphate from D-erythrose 4-phosphate: step 5/5. Its function is as follows. Catalyzes the complicated ring closure reaction between the two acyclic compounds 1-deoxy-D-xylulose-5-phosphate (DXP) and 3-amino-2-oxopropyl phosphate (1-amino-acetone-3-phosphate or AAP) to form pyridoxine 5'-phosphate (PNP) and inorganic phosphate. This is Pyridoxine 5'-phosphate synthase from Pelodictyon phaeoclathratiforme (strain DSM 5477 / BU-1).